A 304-amino-acid chain; its full sequence is DCN1-like protein 3 (304 aa).

Disordered regions lie at residues 1–86 (MGQC…AEES) and 284–304 (EGEGRGALSSGPEGLCPEEQT). Gly2 carries N-myristoyl glycine lipidation. A DCUN1 domain is found at 86–278 (SSLQRLEELF…LFDTFVEWEM (193 aa)).

As to quaternary structure, part of a complex containing DCUN1D3, CUL3 and RBX1. Interacts (via the DCUN1 domain) with the unneddylated cullins: interacts with CUL1, CUL2, CUL3, CUL4A, CUL4B and CUL5; these interactions promote the cullin neddylation and the identity of the cullin dictates the affinity of the interaction. Interacts preferentially with CUL3; this interaction triggers the relocalization of CUL3 to the cell membrane where CUL3 is neddylated. Interacts (via DCUN1 domain) with RBX1. May also interact with regulators or subunits of cullin-RING ligases such as RNF7, ELOB and DDB1; these interactions are bridged by cullins. Interacts (via DCUN1 domain) with CAND1; this interaction is bridged by cullins and strongly inhibits cullin neddylation. These CAND-cullin-DCNL complexes can only be neddylated in the presence of a substrate adapter. Interacts (via DCUN1 domain) with the N-terminally acetylated form of UBE2M and UBE2F. In terms of tissue distribution, tends to be down-regulated in different type of cancers, including lung neuroendocrine carcinoma, thyroid Huerthle cell carcinoma and lung squamous cell carcinoma. Mostly expressed in testis and brain. Highly expressed in liver, bladder and renal normal tissue than their tumor tissue counterparts. Palmitoylation stabilizes DCUN1D3 at the cell membrane.

The protein resides in the cell membrane. The protein localises to the cytoplasm. It is found in the nucleus. Its subcellular location is the perinuclear region. Contributes to the neddylation of all cullins by transferring NEDD8 from N-terminally acetylated NEDD8-conjugating E2s enzyme to different cullin C-terminal domain-RBX complexes and may play a role in the cell cycle progression by regulating the SCF ubiquitin E3 ligase complex, after UV damage. At the cell membrane, can promote and as well inhibit cullins neddylation. This chain is DCN1-like protein 3, found in Homo sapiens (Human).